Here is a 732-residue protein sequence, read N- to C-terminus: Exonuclease 1 (732 aa).

Positions 1-99 (MGITGLIPFV…KRRRDSRKQS (99 aa)) are N-domain. Residues Asp30, Asp78, Glu150, Asp152, Asp171, Asp173, and Asp226 each contribute to the Mg(2+) site. Positions 138 to 230 (RSRNVDCIVA…ILSGCDYLDS (93 aa)) are I-domain. Disordered regions lie at residues 422–471 (YSFK…QRSP), 524–625 (DEQT…TNST), and 661–716 (SCSS…VSQN). 2 positions are modified to phosphoserine: Ser431 and Ser433. Over residues 432 to 442 (PSREDSVDQER) the composition is skewed to basic and acidic residues. Thr443 bears the Phosphothreonine mark. Ser447 is modified (phosphoserine). 2 stretches are compositionally biased toward basic and acidic residues: residues 457-467 (FAKERTGEEAN) and 525-537 (EQTR…LRDT). Composition is skewed to polar residues over residues 572–593 (RCSS…SLLE) and 608–625 (DLNN…TNST). A compositionally biased stretch (low complexity) spans 661–677 (SCSSDQRASSTSSSSQQ). Over residues 703 to 716 (KSRTNGKLGAVSQN) the composition is skewed to polar residues.

This sequence belongs to the XPG/RAD2 endonuclease family. EXO1 subfamily. Requires Mg(2+) as cofactor. As to expression, specifically expressed in the female germline.

The protein localises to the nucleus. 5'-&gt;3' double-stranded DNA exonuclease which may also contain a cryptic 3'-&gt;5' double-stranded DNA exonuclease activity. Also exhibits endonuclease activity against 5'-overhanging flap structures similar to those generated by displacement synthesis when DNA polymerase encounters the 5'-end of a downstream Okazaki fragment. Required for DNA mismatch repair (MMR). The protein is Exonuclease 1 (tos) of Drosophila melanogaster (Fruit fly).